The following is a 224-amino-acid chain: GTP cyclohydrolase 1 (224 aa).

The tract at residues 1-20 is disordered; sequence MKQEKTVSPTVENNRSAESR. Zn(2+) is bound by residues Cys-114, His-117, and Cys-185.

It belongs to the GTP cyclohydrolase I family. As to quaternary structure, toroid-shaped homodecamer, composed of two pentamers of five dimers.

It catalyses the reaction GTP + H2O = 7,8-dihydroneopterin 3'-triphosphate + formate + H(+). Its pathway is cofactor biosynthesis; 7,8-dihydroneopterin triphosphate biosynthesis; 7,8-dihydroneopterin triphosphate from GTP: step 1/1. In Chlorobaculum tepidum (strain ATCC 49652 / DSM 12025 / NBRC 103806 / TLS) (Chlorobium tepidum), this protein is GTP cyclohydrolase 1.